Reading from the N-terminus, the 191-residue chain is Ribonuclease HII (191 aa).

The 185-residue stretch at 7 to 191 (ILMAGVDEVG…YSPVADLISK (185 aa)) folds into the RNase H type-2 domain. Positions 13, 14, and 103 each coordinate a divalent metal cation.

This sequence belongs to the RNase HII family. The cofactor is Mn(2+). Mg(2+) serves as cofactor.

Its subcellular location is the cytoplasm. It carries out the reaction Endonucleolytic cleavage to 5'-phosphomonoester.. Endonuclease that specifically degrades the RNA of RNA-DNA hybrids. The sequence is that of Ribonuclease HII from Legionella pneumophila (strain Corby).